Here is a 119-residue protein sequence, read N- to C-terminus: Short coiled-coil protein A (119 aa).

Residues 1-10 show a composition bias toward acidic residues; the sequence is MEGDVDEDDG. The tract at residues 1 to 26 is disordered; it reads MEGDVDEDDGTFTNISLADDSADGEP. A coiled-coil region spans residues 48-95; the sequence is MENQVEQEEKTRLINQVLELQHTLEDLSARVDAVKEENLKLKSENQVL.

This sequence belongs to the SCOC family.

The protein resides in the golgi apparatus membrane. The protein localises to the golgi apparatus. It localises to the trans-Golgi network. Its subcellular location is the cytoplasm. It is found in the cytosol. Functionally, positive regulator of amino acid starvation-induced autophagy. The protein is Short coiled-coil protein A (scoca) of Danio rerio (Zebrafish).